The primary structure comprises 165 residues: Ribosome maturation factor RimM (165 aa).

Positions 94–165 (EDEFYIADLN…YGILNYKREV (72 aa)) constitute a PRC barrel domain.

Belongs to the RimM family. In terms of assembly, binds ribosomal protein uS19.

Its subcellular location is the cytoplasm. In terms of biological role, an accessory protein needed during the final step in the assembly of 30S ribosomal subunit, possibly for assembly of the head region. Essential for efficient processing of 16S rRNA. May be needed both before and after RbfA during the maturation of 16S rRNA. It has affinity for free ribosomal 30S subunits but not for 70S ribosomes. This Rickettsia canadensis (strain McKiel) protein is Ribosome maturation factor RimM.